Consider the following 343-residue polypeptide: Homeobox protein Hox-D13 (343 aa).

Disordered regions lie at residues 1-28 (MSRAGSWDMDGLRADGGGAGGAPASSSS) and 78-115 (GTSERTGSSSSSSSSAVVAARPEAPPAKECPAPTPAAA). Residues 85–115 (SSSSSSSSAVVAARPEAPPAKECPAPTPAAA) are compositionally biased toward low complexity. Positions 276 to 335 (GRKKRVPYTKLQLKELENEYAINKFINKDKRRRISAATNLSERQVTIWFQNRRVKDKKIV) form a DNA-binding region, homeobox.

It belongs to the Abd-B homeobox family.

The protein resides in the nucleus. Functionally, sequence-specific transcription factor that binds gene promoters and activates their transcription. Part of a developmental regulatory system that provides cells with specific positional identities on the anterior-posterior axis. This Homo sapiens (Human) protein is Homeobox protein Hox-D13 (HOXD13).